A 163-amino-acid chain; its full sequence is Peptide methionine sulfoxide reductase MsrA (163 aa).

The active site involves C10.

This sequence belongs to the MsrA Met sulfoxide reductase family.

It carries out the reaction L-methionyl-[protein] + [thioredoxin]-disulfide + H2O = L-methionyl-(S)-S-oxide-[protein] + [thioredoxin]-dithiol. It catalyses the reaction [thioredoxin]-disulfide + L-methionine + H2O = L-methionine (S)-S-oxide + [thioredoxin]-dithiol. Has an important function as a repair enzyme for proteins that have been inactivated by oxidation. Catalyzes the reversible oxidation-reduction of methionine sulfoxide in proteins to methionine. The chain is Peptide methionine sulfoxide reductase MsrA from Ruthia magnifica subsp. Calyptogena magnifica.